The primary structure comprises 491 residues: Probable ribonuclease FAU-1 (491 aa).

This sequence belongs to the FAU-1 family.

Probable RNase involved in rRNA stability through maturation and/or degradation of precursor rRNAs. Binds to RNA in loop regions with AU-rich sequences. This chain is Probable ribonuclease FAU-1, found in Thermofilum pendens (strain DSM 2475 / Hrk 5).